Reading from the N-terminus, the 298-residue chain is 33 kDa chaperonin (298 aa).

Cystine bridges form between Cys-237–Cys-239 and Cys-270–Cys-273.

Belongs to the HSP33 family. Under oxidizing conditions two disulfide bonds are formed involving the reactive cysteines. Under reducing conditions zinc is bound to the reactive cysteines and the protein is inactive.

It is found in the cytoplasm. Its function is as follows. Redox regulated molecular chaperone. Protects both thermally unfolding and oxidatively damaged proteins from irreversible aggregation. Plays an important role in the bacterial defense system toward oxidative stress. This chain is 33 kDa chaperonin, found in Enterococcus faecalis (strain ATCC 700802 / V583).